Reading from the N-terminus, the 285-residue chain is S-methyl-5'-thioadenosine phosphorylase (285 aa).

Phosphate is bound by residues S10, 52-53, and 85-86; these read RH and TA. M188 is a binding site for substrate. T189 is a phosphate binding site. 212–214 is a binding site for substrate; sequence DYD.

It belongs to the PNP/MTAP phosphorylase family. MTAP subfamily. Homotrimer.

The protein localises to the cytoplasm. The protein resides in the nucleus. The enzyme catalyses S-methyl-5'-thioadenosine + phosphate = 5-(methylsulfanyl)-alpha-D-ribose 1-phosphate + adenine. Its pathway is amino-acid biosynthesis; L-methionine biosynthesis via salvage pathway; S-methyl-5-thio-alpha-D-ribose 1-phosphate from S-methyl-5'-thioadenosine (phosphorylase route): step 1/1. In terms of biological role, catalyzes the reversible phosphorylation of S-methyl-5'-thioadenosine (MTA) to adenine and 5-methylthioribose-1-phosphate. Involved in the breakdown of MTA, a major by-product of polyamine biosynthesis. Responsible for the first step in the methionine salvage pathway after MTA has been generated from S-adenosylmethionine. Has broad substrate specificity with 6-aminopurine nucleosides as preferred substrates. This chain is S-methyl-5'-thioadenosine phosphorylase, found in Caenorhabditis briggsae.